The chain runs to 515 residues: Protein nucleotidyltransferase YdiU (515 aa).

ATP is bound by residues Gly-101, Gly-103, Arg-104, Lys-124, Asp-136, Gly-137, Arg-194, and Arg-201. The active-site Proton acceptor is the Asp-269. Asn-270 and Asp-279 together coordinate Mg(2+). Asp-279 lines the ATP pocket.

Belongs to the SELO family. Mg(2+) is required as a cofactor. Requires Mn(2+) as cofactor.

It carries out the reaction L-seryl-[protein] + ATP = 3-O-(5'-adenylyl)-L-seryl-[protein] + diphosphate. The enzyme catalyses L-threonyl-[protein] + ATP = 3-O-(5'-adenylyl)-L-threonyl-[protein] + diphosphate. The catalysed reaction is L-tyrosyl-[protein] + ATP = O-(5'-adenylyl)-L-tyrosyl-[protein] + diphosphate. It catalyses the reaction L-histidyl-[protein] + UTP = N(tele)-(5'-uridylyl)-L-histidyl-[protein] + diphosphate. It carries out the reaction L-seryl-[protein] + UTP = O-(5'-uridylyl)-L-seryl-[protein] + diphosphate. The enzyme catalyses L-tyrosyl-[protein] + UTP = O-(5'-uridylyl)-L-tyrosyl-[protein] + diphosphate. Functionally, nucleotidyltransferase involved in the post-translational modification of proteins. It can catalyze the addition of adenosine monophosphate (AMP) or uridine monophosphate (UMP) to a protein, resulting in modifications known as AMPylation and UMPylation. This Cytophaga hutchinsonii (strain ATCC 33406 / DSM 1761 / CIP 103989 / NBRC 15051 / NCIMB 9469 / D465) protein is Protein nucleotidyltransferase YdiU.